The primary structure comprises 334 residues: Phosphate acyltransferase (334 aa).

The protein belongs to the PlsX family. In terms of assembly, homodimer. Probably interacts with PlsY.

It localises to the cytoplasm. It catalyses the reaction a fatty acyl-[ACP] + phosphate = an acyl phosphate + holo-[ACP]. The protein operates within lipid metabolism; phospholipid metabolism. Functionally, catalyzes the reversible formation of acyl-phosphate (acyl-PO(4)) from acyl-[acyl-carrier-protein] (acyl-ACP). This enzyme utilizes acyl-ACP as fatty acyl donor, but not acyl-CoA. The chain is Phosphate acyltransferase from Fervidobacterium nodosum (strain ATCC 35602 / DSM 5306 / Rt17-B1).